Reading from the N-terminus, the 302-residue chain is MRLGSPGLLFLLFSSLRADTQEKEVRAMVGSDVELSCACPEGSRFDLNDVYVYWQTSESKTVVTYHIPQNSSLENVDSRYRNRALMSPAGMLRGDFSLRLFNVTPQDEQKFHCLVLSQSLGFQEVLSVEVTLHVAANFSVPVVSAPHSPSQDELTFTCTSINGYPRPNVYWINKTDNSLLDQALQNDTVFLNMRGLYDVVSVLRIARTPSVNIGCCIENVLLQQNLTVGSQTGNDIGERDKITENPVSTGEKNAATWSILAVLCLLVVVAVAIGWVCRDRCLQHSYAGAWAVSPETELTGHV.

An N-terminal signal peptide occupies residues 1 to 18 (MRLGSPGLLFLLFSSLRA). An Ig-like V-type domain is found at 19 to 129 (DTQEKEVRAM…LGFQEVLSVE (111 aa)). Residues 19–256 (DTQEKEVRAM…VSTGEKNAAT (238 aa)) lie on the Extracellular side of the membrane. Cysteine 37 and cysteine 113 are joined by a disulfide. Asparagine 70, asparagine 137, asparagine 173, asparagine 186, and asparagine 225 each carry an N-linked (GlcNAc...) asparagine glycan. Residues 141 to 227 (PVVSAPHSPS…ENVLLQQNLT (87 aa)) enclose the Ig-like C2-type domain. Cysteine 158 and cysteine 216 are joined by a disulfide. Residues 257 to 277 (WSILAVLCLLVVVAVAIGWVC) traverse the membrane as a helical segment. At 278-302 (RDRCLQHSYAGAWAVSPETELTGHV) the chain is on the cytoplasmic side.

This sequence belongs to the immunoglobulin superfamily. BTN/MOG family. Interacts with CTLA4 (in vitro). As to expression, expressed on peripheral blood B-cells and monocytes, as well as on monocyte-derived dendritic cells (at protein level). In terms of tissue distribution, widely expressed (brain, heart, kidney, liver, lung, pancreas, placenta, skeletal muscle, bone marrow, colon, ovary, prostate, testis, lymph nodes, leukocytes, spleen, thymus and tonsil). Detected only in lymph nodes, leukocytes and spleen. Expressed on activated monocytes and dendritic cells.

It is found in the cell membrane. Functionally, ligand for the T-cell-specific cell surface receptor ICOS. Acts as a costimulatory signal for T-cell proliferation and cytokine secretion. Also induces B-cell proliferation and differentiation into plasma cells. Could play an important role in mediating local tissue responses to inflammatory conditions, as well as in modulating the secondary immune response by co-stimulating memory T-cell function. In endothelial cells, required for proper neutrophil transmigration in response to chemoattractants, such as CXCL8/IL8 or N-formyl-methionyl peptides (fMLP). In Homo sapiens (Human), this protein is ICOS ligand (ICOSLG).